Reading from the N-terminus, the 301-residue chain is Inactive C-alpha-formylglycine-generating enzyme 2 (301 aa).

A signal peptide spans 1 to 25; that stretch reads MGISLSPLLTVLSLLSGRWLELGNG. A disulfide bridge links cysteine 156 with cysteine 290. Asparagine 191 carries an N-linked (GlcNAc...) asparagine glycan. Residues asparagine 194, leucine 195, aspartate 208, phenylalanine 210, aspartate 229, glycine 232, valine 234, and glutamate 236 each contribute to the Ca(2+) site. Polar residues predominate over residues 274–284; that stretch reads RMGNTPDSASD. A disordered region spans residues 274–301; that stretch reads RMGNTPDSASDNLGFRCASGAGRPPGEL. The Non-canonical ER retention motif motif lies at 298 to 301; that stretch reads PGEL.

Belongs to the sulfatase-modifying factor family. Homodimer and heterodimer with SUMF1.

The protein localises to the endoplasmic reticulum lumen. Lacks formylglycine generating activity and is unable to convert newly synthesized inactive sulfatases to their active form. Inhibits the activation of sulfatases by SUMF1. The protein is Inactive C-alpha-formylglycine-generating enzyme 2 of Bos taurus (Bovine).